We begin with the raw amino-acid sequence, 74 residues long: Acyl carrier protein (74 aa).

The Carrier domain maps to 1-73; the sequence is MAVFEKVQEI…DLVAYVEEKT (73 aa). The residue at position 35 (S35) is an O-(pantetheine 4'-phosphoryl)serine.

It belongs to the acyl carrier protein (ACP) family. Post-translationally, 4'-phosphopantetheine is transferred from CoA to a specific serine of apo-ACP by AcpS. This modification is essential for activity because fatty acids are bound in thioester linkage to the sulfhydryl of the prosthetic group.

Its subcellular location is the cytoplasm. Its pathway is lipid metabolism; fatty acid biosynthesis. Carrier of the growing fatty acid chain in fatty acid biosynthesis. This chain is Acyl carrier protein, found in Streptococcus thermophilus (strain CNRZ 1066).